We begin with the raw amino-acid sequence, 215 residues long: Cytidylate kinase (215 aa).

10–18 (GPAASGKGT) serves as a coordination point for ATP.

The protein belongs to the cytidylate kinase family. Type 1 subfamily.

It localises to the cytoplasm. It carries out the reaction CMP + ATP = CDP + ADP. It catalyses the reaction dCMP + ATP = dCDP + ADP. In Bartonella bacilliformis (strain ATCC 35685 / KC583 / Herrer 020/F12,63), this protein is Cytidylate kinase.